The following is a 396-amino-acid chain: Elongation factor Tu 2 (396 aa).

The tr-type G domain occupies 10–206; the sequence is KPHVNVGTIG…TLDTYIPEPE (197 aa). The G1 stretch occupies residues 19–26; that stretch reads GHVDHGKT. Residue 19-26 participates in GTP binding; sequence GHVDHGKT. Residue Thr-26 participates in Mg(2+) binding. The tract at residues 60-64 is G2; that stretch reads GITIN. Residues 81–84 form a G3 region; the sequence is DCPG. GTP is bound by residues 81–85 and 136–139; these read DCPGH and NKCD. The segment at 136–139 is G4; the sequence is NKCD. A G5 region spans residues 174–176; that stretch reads SAL.

Belongs to the TRAFAC class translation factor GTPase superfamily. Classic translation factor GTPase family. EF-Tu/EF-1A subfamily. In terms of assembly, monomer.

The protein localises to the cytoplasm. The enzyme catalyses GTP + H2O = GDP + phosphate + H(+). In terms of biological role, GTP hydrolase that promotes the GTP-dependent binding of aminoacyl-tRNA to the A-site of ribosomes during protein biosynthesis. This chain is Elongation factor Tu 2, found in Psychrobacter sp. (strain PRwf-1).